The primary structure comprises 267 residues: Tetrahydromethanopterin S-methyltransferase subunit C (267 aa).

A run of 8 helical transmembrane segments spans residues 18–38 (LMAL…VNPV), 39–59 (IGPV…ADAI), 76–96 (YMSV…VFVV), 99–119 (IAVP…VAVL), 138–158 (ISGA…GSYT), 163–183 (LTSV…TMAI), 209–229 (FISM…WWLV), and 230–250 (SLIG…ASFE).

It belongs to the MtrC family. The complex is composed of 8 subunits; MtrA, MtrB, MtrC, MtrD, MtrE, MtrF, MtrG and MtrH.

It localises to the cell membrane. It carries out the reaction 5-methyl-5,6,7,8-tetrahydromethanopterin + coenzyme M + 2 Na(+)(in) = 5,6,7,8-tetrahydromethanopterin + methyl-coenzyme M + 2 Na(+)(out). Its pathway is one-carbon metabolism; methanogenesis from CO(2); methyl-coenzyme M from 5,10-methylene-5,6,7,8-tetrahydromethanopterin: step 2/2. Its function is as follows. Part of a complex that catalyzes the formation of methyl-coenzyme M and tetrahydromethanopterin from coenzyme M and methyl-tetrahydromethanopterin. This is an energy-conserving, sodium-ion translocating step. The protein is Tetrahydromethanopterin S-methyltransferase subunit C of Methanothermobacter marburgensis (strain ATCC BAA-927 / DSM 2133 / JCM 14651 / NBRC 100331 / OCM 82 / Marburg) (Methanobacterium thermoautotrophicum).